A 258-amino-acid chain; its full sequence is Imidazole glycerol phosphate synthase subunit HisF (258 aa).

Residues Asp11 and Asp130 contribute to the active site.

Belongs to the HisA/HisF family. As to quaternary structure, heterodimer of HisH and HisF.

The protein resides in the cytoplasm. The enzyme catalyses 5-[(5-phospho-1-deoxy-D-ribulos-1-ylimino)methylamino]-1-(5-phospho-beta-D-ribosyl)imidazole-4-carboxamide + L-glutamine = D-erythro-1-(imidazol-4-yl)glycerol 3-phosphate + 5-amino-1-(5-phospho-beta-D-ribosyl)imidazole-4-carboxamide + L-glutamate + H(+). It participates in amino-acid biosynthesis; L-histidine biosynthesis; L-histidine from 5-phospho-alpha-D-ribose 1-diphosphate: step 5/9. IGPS catalyzes the conversion of PRFAR and glutamine to IGP, AICAR and glutamate. The HisF subunit catalyzes the cyclization activity that produces IGP and AICAR from PRFAR using the ammonia provided by the HisH subunit. In Blochmanniella floridana, this protein is Imidazole glycerol phosphate synthase subunit HisF.